A 117-amino-acid polypeptide reads, in one-letter code: Large ribosomal subunit protein bL19 (117 aa).

It belongs to the bacterial ribosomal protein bL19 family.

Functionally, this protein is located at the 30S-50S ribosomal subunit interface and may play a role in the structure and function of the aminoacyl-tRNA binding site. The chain is Large ribosomal subunit protein bL19 from Leptothrix cholodnii (strain ATCC 51168 / LMG 8142 / SP-6) (Leptothrix discophora (strain SP-6)).